A 124-amino-acid chain; its full sequence is Small ribosomal subunit protein uS13 (124 aa).

Positions 95 to 124 (GLPVRGQRTKTNARTRKGPKRTIAGKKKAR) are disordered.

Belongs to the universal ribosomal protein uS13 family. In terms of assembly, part of the 30S ribosomal subunit. Forms a loose heterodimer with protein S19. Forms two bridges to the 50S subunit in the 70S ribosome.

Functionally, located at the top of the head of the 30S subunit, it contacts several helices of the 16S rRNA. In the 70S ribosome it contacts the 23S rRNA (bridge B1a) and protein L5 of the 50S subunit (bridge B1b), connecting the 2 subunits; these bridges are implicated in subunit movement. Contacts the tRNAs in the A and P-sites. The polypeptide is Small ribosomal subunit protein uS13 (Mycobacteroides abscessus (strain ATCC 19977 / DSM 44196 / CCUG 20993 / CIP 104536 / JCM 13569 / NCTC 13031 / TMC 1543 / L948) (Mycobacterium abscessus)).